The chain runs to 336 residues: MSRVGIIGAGSWGTALSLVLANNGHSVEIWSIVESEIEMLKEKHEHIDKLPGVKLPDSITFTTDIEETIKNNDILVLAVPSVFTRSTAVKMAPFVKEGQIIVCVAKGIEENTLMTISDVVESEIPCADVAVMCGPSHAEEVGRLLPTTVVAGARTQKTAEIVQDLFMNEVFRVYTSPDVLGMELGGSLKNVIALAAGMADGLGYGDNTKAALITRGIAEISVLAIEMGAKAETLFGLTGIGDLIVTCESRHSRNRKAGMLIGQGYTMDEATKEVKMVVEGIYSAKAALALAEKYDVRMPIIEEVNRVLFEDKPAKEAVSELMLRDRKIEHSSLEWK.

NADPH contacts are provided by Ser-11, Trp-12, and Lys-106. Sn-glycerol 3-phosphate is bound by residues Lys-106, Gly-134, and Ser-136. Ala-138 lines the NADPH pocket. Sn-glycerol 3-phosphate is bound by residues Lys-189, Asp-242, Ser-252, Arg-253, and Asn-254. Catalysis depends on Lys-189, which acts as the Proton acceptor. Arg-253 is a binding site for NADPH. Residues Val-277 and Glu-279 each contribute to the NADPH site.

This sequence belongs to the NAD-dependent glycerol-3-phosphate dehydrogenase family.

It is found in the cytoplasm. The catalysed reaction is sn-glycerol 3-phosphate + NAD(+) = dihydroxyacetone phosphate + NADH + H(+). It carries out the reaction sn-glycerol 3-phosphate + NADP(+) = dihydroxyacetone phosphate + NADPH + H(+). It participates in membrane lipid metabolism; glycerophospholipid metabolism. Catalyzes the reduction of the glycolytic intermediate dihydroxyacetone phosphate (DHAP) to sn-glycerol 3-phosphate (G3P), the key precursor for phospholipid synthesis. The protein is Glycerol-3-phosphate dehydrogenase [NAD(P)+] of Agathobacter rectalis (strain ATCC 33656 / DSM 3377 / JCM 17463 / KCTC 5835 / VPI 0990) (Eubacterium rectale).